The following is a 643-amino-acid chain: Threonine--tRNA ligase (643 aa).

The 61-residue stretch at 1–61 (MPIITLPDGS…TEDSKLEIIT (61 aa)) folds into the TGS domain. The catalytic stretch occupies residues 243–534 (DHRKIGKALD…ITEEYAGFFP (292 aa)). Zn(2+)-binding residues include Cys334, His385, and His511.

The protein belongs to the class-II aminoacyl-tRNA synthetase family. As to quaternary structure, homodimer. It depends on Zn(2+) as a cofactor.

It is found in the cytoplasm. It carries out the reaction tRNA(Thr) + L-threonine + ATP = L-threonyl-tRNA(Thr) + AMP + diphosphate + H(+). Its function is as follows. Catalyzes the attachment of threonine to tRNA(Thr) in a two-step reaction: L-threonine is first activated by ATP to form Thr-AMP and then transferred to the acceptor end of tRNA(Thr). Also edits incorrectly charged L-seryl-tRNA(Thr). This is Threonine--tRNA ligase from Pasteurella multocida (strain Pm70).